The sequence spans 274 residues: ATP synthase subunit delta (274 aa).

Belongs to the ATPase delta chain family. F-type ATPases have 2 components, F(1) - the catalytic core - and F(0) - the membrane proton channel. F(1) has five subunits: alpha(3), beta(3), gamma(1), delta(1), epsilon(1). F(0) has three main subunits: a(1), b(2) and c(10-14). The alpha and beta chains form an alternating ring which encloses part of the gamma chain. F(1) is attached to F(0) by a central stalk formed by the gamma and epsilon chains, while a peripheral stalk is formed by the delta and b chains.

The protein resides in the cell membrane. In terms of biological role, f(1)F(0) ATP synthase produces ATP from ADP in the presence of a proton or sodium gradient. F-type ATPases consist of two structural domains, F(1) containing the extramembraneous catalytic core and F(0) containing the membrane proton channel, linked together by a central stalk and a peripheral stalk. During catalysis, ATP synthesis in the catalytic domain of F(1) is coupled via a rotary mechanism of the central stalk subunits to proton translocation. Its function is as follows. This protein is part of the stalk that links CF(0) to CF(1). It either transmits conformational changes from CF(0) to CF(1) or is implicated in proton conduction. This Salinispora arenicola (strain CNS-205) protein is ATP synthase subunit delta.